The primary structure comprises 412 residues: MAEEKWVVMVTAQTPTNIAVIKYWGKRDEVRILPINDSISVTLDPDHLCTLTTVAVSPSFDRDRMWLNGKEISLSGSRYQNCLREIRSRADDVEDKEKGIKIAKKDWEKLHLHIASHNNFPTAAGLASSAAGFACLVFALAKLMNVNEDPSQLSAIARQGSGSACRSLFGGFVKWNMGNKEDGSDSVAVQLVDDKHWDDLVIIIAVVSSRQKETSSTSGMRESVETSLLLQHRAKEVVPVRILQMEEAIKNRDFTSFTKLTCSDSNQFHAVCMDTSPPIFYMNDTSHRIISLVEKWNRSAGTPEIAYTFDAGPNAVMIARNRKVAVELLQGLLYCFPPKPDTDMKSYVLGDTSIVKEAGLEGELPQGIKDKIGSQDQKGEVSYFICSRPGRGPVVLQDQTQALLHPQTGLPK.

23–26 (YWGK) is a binding site for (R)-5-diphosphomevalonate. Residues 40 to 48 (SVTLDPDHL) carry the Peroxisomal targeting signal PTS2 motif. (R)-5-diphosphomevalonate is bound by residues R78, 161–166 (SGSACR), and T217.

It belongs to the diphosphomevalonate decarboxylase family. In terms of assembly, homodimer.

The protein resides in the peroxisome. It catalyses the reaction (R)-5-diphosphomevalonate + ATP = isopentenyl diphosphate + ADP + phosphate + CO2. Its pathway is isoprenoid biosynthesis; isopentenyl diphosphate biosynthesis via mevalonate pathway; isopentenyl diphosphate from (R)-mevalonate: step 3/3. Performs the first committed step in the biosynthesis of isoprene-containing compounds such as sterols and terpenoids. Is specific for (R)-5-diphosphomevalonate (MVAPP). The catalytic efficiency with (R)-5-phosphomevalonate (MVAP) as substrate is 10000-fold lower than for MVAPP. Can complement a yeast mutant defective in MVD activity. This is Diphosphomevalonate decarboxylase MVD1, peroxisomal from Arabidopsis thaliana (Mouse-ear cress).